We begin with the raw amino-acid sequence, 390 residues long: Protein TAB2 homolog, chloroplastic (390 aa).

Residues 1 to 69 constitute a chloroplast transit peptide; that stretch reads MTTATAIVAG…RSISSESSTE (69 aa). The segment at 16-85 is disordered; that stretch reads RRSLPLPNPP…IADEEVEAEN (70 aa). The segment covering 61–75 has biased composition (low complexity); that stretch reads SISSESSTEASAAAD.

Its subcellular location is the plastid. It localises to the chloroplast. In terms of biological role, nuclear genome-encoded factor involved in the biogenesis of photosystem I (PSI). Required for the accumulation of PSI during plant development. Does not seem to be required for the translation of mRNAs of the PSI subunits. This Zea mays (Maize) protein is Protein TAB2 homolog, chloroplastic.